The chain runs to 932 residues: Protocadherin gamma-A6 (932 aa).

The N-terminal stretch at Met1–Ala29 is a signal peptide. Cadherin domains are found at residues Gln30–Phe133, Leu134–Phe242, Thr243–Val347, Val348–Phe452, Pro453–Ile562, and Asp570–Ala682. Residues Gln30–Tyr692 lie on the Extracellular side of the membrane. A glycan (N-linked (GlcNAc...) asparagine) is linked at Asn81. 2 N-linked (GlcNAc...) asparagine glycosylation sites follow: Asn419 and Asn545. An N-linked (GlcNAc...) asparagine glycan is attached at Asn685. A helical membrane pass occupies residues Leu693–Ala713. Residues Leu714–Lys932 lie on the Cytoplasmic side of the membrane. Disordered regions lie at residues Asp803–Asn841 and Ala902–Lys932. The segment covering Gln806–Asn841 has biased composition (polar residues). The span at Asn922–Lys932 shows a compositional bias: basic residues.

The protein resides in the cell membrane. Its function is as follows. Potential calcium-dependent cell-adhesion protein. May be involved in the establishment and maintenance of specific neuronal connections in the brain. The chain is Protocadherin gamma-A6 (PCDHGA6) from Pan troglodytes (Chimpanzee).